We begin with the raw amino-acid sequence, 728 residues long: 1,4-alpha-glucan branching enzyme GlgB (728 aa).

The active-site Nucleophile is the aspartate 405. The active-site Proton donor is the glutamate 458.

This sequence belongs to the glycosyl hydrolase 13 family. GlgB subfamily. Monomer.

It catalyses the reaction Transfers a segment of a (1-&gt;4)-alpha-D-glucan chain to a primary hydroxy group in a similar glucan chain.. It participates in glycan biosynthesis; glycogen biosynthesis. Its function is as follows. Catalyzes the formation of the alpha-1,6-glucosidic linkages in glycogen by scission of a 1,4-alpha-linked oligosaccharide from growing alpha-1,4-glucan chains and the subsequent attachment of the oligosaccharide to the alpha-1,6 position. In Salmonella typhi, this protein is 1,4-alpha-glucan branching enzyme GlgB.